Here is an 84-residue protein sequence, read N- to C-terminus: MISSQAFVAGMCAIGAGLASIACIGGGIGTGNATAKAVEGVSRQPEASGKILSTMIIGSALSEATAIYGFLIAILLVLKIGNIG.

Helical transmembrane passes span 8–28 (VAGM…GGGI) and 56–76 (IIGS…AILL).

Belongs to the ATPase C chain family. F-type ATPases have 2 components, F(1) - the catalytic core - and F(0) - the membrane proton channel. F(1) has five subunits: alpha(3), beta(3), gamma(1), delta(1), epsilon(1). F(0) has three main subunits: a(1), b(2) and c(10-14). The alpha and beta chains form an alternating ring which encloses part of the gamma chain. F(1) is attached to F(0) by a central stalk formed by the gamma and epsilon chains, while a peripheral stalk is formed by the delta and b chains.

It localises to the cell membrane. Its function is as follows. F(1)F(0) ATP synthase produces ATP from ADP in the presence of a proton or sodium gradient. F-type ATPases consist of two structural domains, F(1) containing the extramembraneous catalytic core and F(0) containing the membrane proton channel, linked together by a central stalk and a peripheral stalk. During catalysis, ATP synthesis in the catalytic domain of F(1) is coupled via a rotary mechanism of the central stalk subunits to proton translocation. Key component of the F(0) channel; it plays a direct role in translocation across the membrane. A homomeric c-ring of between 10-14 subunits forms the central stalk rotor element with the F(1) delta and epsilon subunits. The polypeptide is ATP synthase subunit c (Clostridium novyi (strain NT)).